The sequence spans 205 residues: Cytochrome c oxidase subunit 3 (205 aa).

A run of 5 helical transmembrane segments spans residues 28–48, 72–92, 104–124, 142–162, and 184–204; these read GTIV…AMYF, ALVI…GVFA, WFSL…YEYF, FFIT…AFVV, and SYYW…IYFI.

Belongs to the cytochrome c oxidase subunit 3 family. In terms of assembly, associates with subunits I, II and IV to form cytochrome c oxidase.

It is found in the cell membrane. It catalyses the reaction 4 Fe(II)-[cytochrome c] + O2 + 8 H(+)(in) = 4 Fe(III)-[cytochrome c] + 2 H2O + 4 H(+)(out). This chain is Cytochrome c oxidase subunit 3 (ctaE), found in Corynebacterium diphtheriae (strain ATCC 700971 / NCTC 13129 / Biotype gravis).